The primary structure comprises 104 residues: Large ribosomal subunit protein uL24 (104 aa).

This sequence belongs to the universal ribosomal protein uL24 family. As to quaternary structure, part of the 50S ribosomal subunit.

Functionally, one of two assembly initiator proteins, it binds directly to the 5'-end of the 23S rRNA, where it nucleates assembly of the 50S subunit. Its function is as follows. One of the proteins that surrounds the polypeptide exit tunnel on the outside of the subunit. The protein is Large ribosomal subunit protein uL24 of Shewanella amazonensis (strain ATCC BAA-1098 / SB2B).